A 281-amino-acid chain; its full sequence is Pantothenate synthetase (281 aa).

An ATP-binding site is contributed by 31 to 38; that stretch reads MGALHDGH. His-38 serves as the catalytic Proton donor. (R)-pantoate is bound at residue Gln-62. Gln-62 serves as a coordination point for beta-alanine. 148–151 lines the ATP pocket; it reads GQKD. A (R)-pantoate-binding site is contributed by Gln-154. Residues Val-177 and 185-188 contribute to the ATP site; that span reads LSSR.

This sequence belongs to the pantothenate synthetase family. In terms of assembly, homodimer.

The protein resides in the cytoplasm. It carries out the reaction (R)-pantoate + beta-alanine + ATP = (R)-pantothenate + AMP + diphosphate + H(+). It functions in the pathway cofactor biosynthesis; (R)-pantothenate biosynthesis; (R)-pantothenate from (R)-pantoate and beta-alanine: step 1/1. Catalyzes the condensation of pantoate with beta-alanine in an ATP-dependent reaction via a pantoyl-adenylate intermediate. The protein is Pantothenate synthetase of Dinoroseobacter shibae (strain DSM 16493 / NCIMB 14021 / DFL 12).